Reading from the N-terminus, the 1700-residue chain is uncharacterized protein (1700 aa).

Residues 986–1006 (APITQYPVLCYLLYLLSYYLV) traverse the membrane as a helical segment. 2 coiled-coil regions span residues 1246 to 1278 (DQNA…REIK) and 1657 to 1684 (QDMD…IEGD). A disordered region spans residues 1650–1700 (DTEPDIMQDMDGEPQEADELEDLKEEAESLDIEGDYFAEEDEDYAQEDFIE). Residues 1651-1700 (TEPDIMQDMDGEPQEADELEDLKEEAESLDIEGDYFAEEDEDYAQEDFIE) are compositionally biased toward acidic residues.

It localises to the host membrane. It is found in the virion. This is an uncharacterized protein from Acanthamoeba polyphaga (Amoeba).